A 674-amino-acid polypeptide reads, in one-letter code: DNA ligase (674 aa).

NAD(+)-binding positions include 36–40 (DSVYD), 85–86 (SL), and E116. The active-site N6-AMP-lysine intermediate is the K118. NAD(+) is bound by residues R139, E176, K292, and K316. Zn(2+) is bound by residues C410, C413, C428, and C433. The region spanning 596–674 (PSSGNIAGKT…EADLLKFLTN (79 aa)) is the BRCT domain.

It belongs to the NAD-dependent DNA ligase family. LigA subfamily. Requires Mg(2+) as cofactor. Mn(2+) serves as cofactor.

It catalyses the reaction NAD(+) + (deoxyribonucleotide)n-3'-hydroxyl + 5'-phospho-(deoxyribonucleotide)m = (deoxyribonucleotide)n+m + AMP + beta-nicotinamide D-nucleotide.. Functionally, DNA ligase that catalyzes the formation of phosphodiester linkages between 5'-phosphoryl and 3'-hydroxyl groups in double-stranded DNA using NAD as a coenzyme and as the energy source for the reaction. It is essential for DNA replication and repair of damaged DNA. This is DNA ligase from Rippkaea orientalis (strain PCC 8801 / RF-1) (Cyanothece sp. (strain PCC 8801)).